The chain runs to 739 residues: Prestin (739 aa).

At 1 to 76 (MEHVTVSEEP…PILTWLPSYP (76 aa)) the chain is on the cytoplasmic side. The helical transmembrane segment at 77 to 106 (LKEYLFGDIVSGISTGVMQLPQGLAYAMLA) threads the bilayer. The Extracellular segment spans residues 107–109 (AVP). The helical transmembrane segment at 110–127 (PVFGLYSSFYPVLLYTFF) threads the bilayer. Topologically, residues 128–138 (GTSKHISIGTF) are cytoplasmic. The chain crosses the membrane as a helical span at residues 139–152 (AVISLMIGGVAVRE). At 153–169 (APDSMFMVNGTNSSLVV) the chain is on the extracellular side. Residues N161 and N164 are each glycosylated (N-linked (GlcNAc...) asparagine). A helical transmembrane segment spans residues 170–199 (NIEARDSRRVEVVVALTTLVGIIQFVLGLL). The Cytoplasmic portion of the chain corresponds to 200 to 209 (RFGFLAIYLT). Residues 210 to 233 (EPLVRGFTTAAAVHVSVSQLKYLL) form a helical membrane-spanning segment. Residues 234-244 (GVKTARFNGPL) are Extracellular-facing. The helical intramembrane region spans 245 to 256 (SVVYSLDAVLRN). The Extracellular segment spans residues 257–261 (IADTN). The chain crosses the membrane as a helical span at residues 262 to 285 (IVTLIIGLGCTVFLYIIKQLNERF). Residues 286–294 (KKKLLIPIP) lie on the Cytoplasmic side of the membrane. A helical membrane pass occupies residues 295–310 (GEIIVVIVSTGISYGM). Residues 311-335 (LMSENYGVDVVGKIPTGLLPPKVPD) lie on the Extracellular side of the membrane. Residues 336–370 (FSVFPNLFADAVPIAVVGFSITISLAKTFALKYGY) form a helical membrane-spanning segment. The Cytoplasmic segment spans residues 371 to 373 (SVD). The chain crosses the membrane as a helical span at residues 374–391 (GNQELIALGLCNFVSSFF). At 392–399 (HTFVVTAS) the chain is on the extracellular side. Residues 400–409 (MSRSLVQEST) form a helical membrane-spanning segment. Salicylate is bound at residue S401. At 410–413 (GGHT) the chain is on the cytoplasmic side. A helical membrane pass occupies residues 414–435 (EIAGLLASLLVLLVVVAIGFVF). The Extracellular segment spans residues 436–439 (QPLP). The helical transmembrane segment at 440–467 (TTVLAAIIMVNLLGMFKQTRDIPVLWRK) threads the bilayer. S468 is a topological domain (cytoplasmic). A helical membrane pass occupies residues 469 to 484 (KIELAIWLVSFFASVL). The Extracellular segment spans residues 485–486 (LG). Residues 487–507 (LDYGLAVAMAFAILTVIYRTQ) traverse the membrane as a helical segment. Positions 508-731 (RPKNVVLGQI…AVLQCKRWRD (224 aa)) are extended region for STAS domain. Topologically, residues 508–739 (RPKNVVLGQI…RDLPVHPNIH (232 aa)) are cytoplasmic. Residues 528–726 (EYEEAEECSG…PTIHDAVLQC (199 aa)) form the STAS domain.

This sequence belongs to the SLC26A/SulP transporter (TC 2.A.53) family. In terms of assembly, homodimer. Interacts (via STAS domain) with CALM; this interaction is calcium-dependent. Expressed in hair cells of the auditory organs.

It is found in the cell membrane. The enzyme catalyses oxalate(in) + chloride(out) = oxalate(out) + chloride(in). The catalysed reaction is sulfate(out) + chloride(in) = sulfate(in) + chloride(out). Sulfate/chloride antiport activity is inhibited by salicylate; this inhibition is reversible. In terms of biological role, electrogenic antiporter that exchanges sulfate or oxalate for chloride ion in a strictly coupled manner with a 1:1 stoichiometry. Adopts a dynamic conformation, which alternates between the exposure of the central binding site to the extra- and intracellular solutions leading to an inward-to-outward conformational transition during the transport cycle. Generates voltage-dependent charge movements resembling to the non-linear capacitance (NLC) of the cell membrane, but which are not associated to electromotile activity. The sequence is that of Prestin from Danio rerio (Zebrafish).